A 74-amino-acid polypeptide reads, in one-letter code: Defensin-like protein 39 (74 aa).

Positions 1 to 28 are cleaved as a signal peptide; that stretch reads MEKKSLAALSFLLLLVLFVAQEIVVTEA. 4 disulfide bridges follow: C31–C74, C42–C63, C48–C68, and C52–C70.

Belongs to the DEFL family. In terms of tissue distribution, pods.

Its subcellular location is the secreted. Possesses antifungal activity. The polypeptide is Defensin-like protein 39 (PI39) (Pisum sativum (Garden pea)).